The sequence spans 1286 residues: 5-oxoprolinase (1286 aa).

Phosphoserine occurs at positions 930 and 1077.

Belongs to the oxoprolinase family. In terms of assembly, homodimer.

Its subcellular location is the cytoplasm. It carries out the reaction 5-oxo-L-proline + ATP + 2 H2O = L-glutamate + ADP + phosphate + H(+). Catalyzes the cleavage of 5-oxo-L-proline to form L-glutamate coupled to the hydrolysis of ATP to ADP and inorganic phosphate. In Saccharomyces cerevisiae (strain ATCC 204508 / S288c) (Baker's yeast), this protein is 5-oxoprolinase (OXP1).